The sequence spans 504 residues: Maturase K (504 aa).

The protein belongs to the intron maturase 2 family. MatK subfamily.

It is found in the plastid. Its subcellular location is the chloroplast. Functionally, usually encoded in the trnK tRNA gene intron. Probably assists in splicing its own and other chloroplast group II introns. In Taxus baccata (English yew), this protein is Maturase K.